The primary structure comprises 94 residues: Co-chaperonin GroES (94 aa).

This sequence belongs to the GroES chaperonin family. Heptamer of 7 subunits arranged in a ring. Interacts with the chaperonin GroEL.

Its subcellular location is the cytoplasm. Together with the chaperonin GroEL, plays an essential role in assisting protein folding. The GroEL-GroES system forms a nano-cage that allows encapsulation of the non-native substrate proteins and provides a physical environment optimized to promote and accelerate protein folding. GroES binds to the apical surface of the GroEL ring, thereby capping the opening of the GroEL channel. The polypeptide is Co-chaperonin GroES (Tetragenococcus halophilus (Pediococcus halophilus)).